Here is a 414-residue protein sequence, read N- to C-terminus: Histidine--tRNA ligase (414 aa).

This sequence belongs to the class-II aminoacyl-tRNA synthetase family. As to quaternary structure, homodimer.

The protein resides in the cytoplasm. The enzyme catalyses tRNA(His) + L-histidine + ATP = L-histidyl-tRNA(His) + AMP + diphosphate + H(+). This Synechococcus sp. (strain RCC307) protein is Histidine--tRNA ligase.